The following is a 346-amino-acid chain: Inner membrane protein YnjI (346 aa).

The Periplasmic portion of the chain corresponds to 1 to 38; it reads MKKVLLQNHPGSEKYSFNGWEIFNSNFERMIKENKAML. A helical membrane pass occupies residues 39–59; it reads LCKWGFYLTCVVAVMFVFAAI. The Cytoplasmic segment spans residues 60–68; sequence TSNGLNERG. A helical membrane pass occupies residues 69–89; it reads LITAGCSFLYLLIMMGLIVRA. Residues 90 to 234 are Periplasmic-facing; sequence GFKAKKEQLH…DCANHSSGKS (145 aa). Residues 235–255 traverse the membrane as a helical segment; that stretch reads SAKLIWAAELSWMISISSTAF. The Cytoplasmic portion of the chain corresponds to 256–346; that stretch reads QNGTIEEELA…PWGASSVKYS (91 aa).

The protein localises to the cell inner membrane. This Escherichia coli (strain K12) protein is Inner membrane protein YnjI (ynjI).